Here is a 367-residue protein sequence, read N- to C-terminus: Avirulence protein ATR5 (367 aa).

Residues 1 to 16 (MRLISPALVVSTAIQA) form the signal peptide. The N-linked (GlcNAc...) asparagine glycan is linked to asparagine 20. A disordered region spans residues 33–65 (NPLASAHPPDVGYDGVPAGRVRNPDDPTTEERT). Residues 54 to 65 (RNPDDPTTEERT) show a composition bias toward basic and acidic residues. A dEER motif is present at residues 61-64 (TEER).

The protein belongs to the RxLR effector family.

Its subcellular location is the secreted. It is found in the host cell. Its function is as follows. Secreted effector that acts as an elicitor of hypersensitive response (HR) specifically on plants carrying defense protein RPP5. The protein is Avirulence protein ATR5 of Hyaloperonospora arabidopsidis (strain Emoy2) (Downy mildew agent).